Consider the following 321-residue polypeptide: Nucleotide-binding protein GOX0815 (321 aa).

27–34 contributes to the ATP binding site; it reads GLSGAGKS. 72–75 contacts GTP; the sequence is DVRS.

Belongs to the RapZ-like family.

Displays ATPase and GTPase activities. The chain is Nucleotide-binding protein GOX0815 from Gluconobacter oxydans (strain 621H) (Gluconobacter suboxydans).